A 251-amino-acid chain; its full sequence is DNA-directed RNA polymerase III subunit RPC7 (251 aa).

Residues aspartate 186–phenylalanine 251 form a disordered region. The residue at position 189 (serine 189) is a Phosphoserine. 2 stretches are compositionally biased toward acidic residues: residues glycine 203–tyrosine 225 and glycine 234–phenylalanine 251.

This sequence belongs to the eukaryotic RPC7 RNA polymerase subunit family. In terms of assembly, component of the RNA polymerase III (Pol III) complex consisting of 17 subunits.

It is found in the nucleus. Functionally, DNA-dependent RNA polymerase catalyzes the transcription of DNA into RNA using the four ribonucleoside triphosphates as substrates. Specific peripheric component of RNA polymerase III which synthesizes small RNAs, such as 5S rRNA and tRNAs. C31 is involved in the formation of the initiation complex. The sequence is that of DNA-directed RNA polymerase III subunit RPC7 (RPC31) from Saccharomyces cerevisiae (strain ATCC 204508 / S288c) (Baker's yeast).